Consider the following 295-residue polypeptide: MSSSRPGFSCSWLPYLLVLPQLAITAVFFLWPAGEALWYSVQMLDPFGLSSEFVGLSNFIALFHDEYYLASFYTTLIFSSLVAGIGLVVSLFLAAMVDYVLRGSRIYQTLMILPYAVAPAVAAVLWIFLFNPGLGLITHFLASLGYNWNHAQNSGQAMFLVVLASVWKQISYNFLFFLAALQSIPRSLVEAAAIDGAGPVRRFFNLVLPLISPVSFFLLVVNLVYAFFDTFPVIDAATGGGPMQATTTLIYKIYREGFAGLDLSSSAAQSVVLMLLVIGLTVIQFRFVERKVRYQ.

The Cytoplasmic portion of the chain corresponds to 1 to 11; sequence MSSSRPGFSCS. A helical transmembrane segment spans residues 12–32; sequence WLPYLLVLPQLAITAVFFLWP. At 33-80 the chain is on the periplasmic side; that stretch reads AGEALWYSVQMLDPFGLSSEFVGLSNFIALFHDEYYLASFYTTLIFSS. Residues 72–284 enclose the ABC transmembrane type-1 domain; sequence FYTTLIFSSL…LLVIGLTVIQ (213 aa). The helical transmembrane segment at 81-101 threads the bilayer; it reads LVAGIGLVVSLFLAAMVDYVL. Residues 102-109 are Cytoplasmic-facing; the sequence is RGSRIYQT. The helical transmembrane segment at 110-130 threads the bilayer; it reads LMILPYAVAPAVAAVLWIFLF. Residues 131 to 157 lie on the Periplasmic side of the membrane; the sequence is NPGLGLITHFLASLGYNWNHAQNSGQA. Residues 158-178 form a helical membrane-spanning segment; sequence MFLVVLASVWKQISYNFLFFL. The Cytoplasmic portion of the chain corresponds to 179 to 207; it reads AALQSIPRSLVEAAAIDGAGPVRRFFNLV. Residues 208-228 traverse the membrane as a helical segment; the sequence is LPLISPVSFFLLVVNLVYAFF. Residues 229-262 are Periplasmic-facing; sequence DTFPVIDAATGGGPMQATTTLIYKIYREGFAGLD. Residues 263–283 form a helical membrane-spanning segment; that stretch reads LSSSAAQSVVLMLLVIGLTVI. Residues 284–295 are Cytoplasmic-facing; sequence QFRFVERKVRYQ.

The protein belongs to the binding-protein-dependent transport system permease family. UgpAE subfamily. The complex is composed of two ATP-binding proteins (UgpC), two transmembrane proteins (UgpA and UgpE) and a solute-binding protein (UgpB).

Its subcellular location is the cell inner membrane. In terms of biological role, part of the ABC transporter complex UgpBAEC involved in sn-glycerol-3-phosphate (G3P) import. Probably responsible for the translocation of the substrate across the membrane. This Yersinia enterocolitica serotype O:8 / biotype 1B (strain NCTC 13174 / 8081) protein is sn-glycerol-3-phosphate transport system permease protein UgpA (ugpA).